We begin with the raw amino-acid sequence, 852 residues long: DNA mismatch repair protein MutS (852 aa).

602–609 (GPNMSGKS) contacts ATP.

It belongs to the DNA mismatch repair MutS family.

This protein is involved in the repair of mismatches in DNA. It is possible that it carries out the mismatch recognition step. This protein has a weak ATPase activity. This Streptococcus thermophilus (strain ATCC BAA-250 / LMG 18311) protein is DNA mismatch repair protein MutS.